The primary structure comprises 500 residues: Cytochrome P450 monooxygenase astJ (500 aa).

Cys-440 provides a ligand contact to heme.

This sequence belongs to the cytochrome P450 family. It depends on heme as a cofactor.

It functions in the pathway secondary metabolite biosynthesis; terpenoid biosynthesis. Cytochrome P450 monooxygenase; part of the gene cluster that mediates the biosynthesis of astellolides, drimane-type sesquiterpene esters that show antimicrobial, anti-inflammatory, and anti-tumor activities. The first step in astellolide biosynthesis is performed by the sesquiterpene cyclase astC that catalyzes the formation of drimanyl pyrophosphate from farnesyl pyrophosphate. Drimanyl pyrophosphate is then dephosphorylated by the sesquiterpene phosphatase astI to produce drimanyl monophosphate which is further dephosphorylated to drim-8-ene-11-ol by atsK. Drim-8-ene-11-ol is converted to confertifolin, probably by the cytochrome P450 monooxygenase astD and/or the dehydrogenase astE. The cytochrome P450 monooxygenases astB, astF and astJ then hydroxylate confertifolin at C6, C14, or C15 to form trihydroxy confertifolin. The nonribosomal peptide synthetase astA catalyzes ester bond formation between trihydroxy contifolin and benzoic acid (BA) or 4-hydroxy benzoic acid (4HBA), leading to the formation of dideacetyl astellolides A and B, respectively. Finally, the O-acetyltransferase astG converts dideacetyl astellolides A and B into deacetyl astellolides A and B. This is Cytochrome P450 monooxygenase astJ from Aspergillus oryzae (strain ATCC 42149 / RIB 40) (Yellow koji mold).